The following is a 317-amino-acid chain: Transaldolase (317 aa).

Lys-126 functions as the Schiff-base intermediate with substrate in the catalytic mechanism.

The protein belongs to the transaldolase family. Type 1 subfamily. In terms of assembly, homodimer.

The protein localises to the cytoplasm. The enzyme catalyses D-sedoheptulose 7-phosphate + D-glyceraldehyde 3-phosphate = D-erythrose 4-phosphate + beta-D-fructose 6-phosphate. It participates in carbohydrate degradation; pentose phosphate pathway; D-glyceraldehyde 3-phosphate and beta-D-fructose 6-phosphate from D-ribose 5-phosphate and D-xylulose 5-phosphate (non-oxidative stage): step 2/3. Transaldolase is important for the balance of metabolites in the pentose-phosphate pathway. The sequence is that of Transaldolase from Burkholderia orbicola (strain AU 1054).